The primary structure comprises 285 residues: Eukaryotic translation initiation factor 3 subunit F-2 (285 aa).

The 135-residue stretch at 11–145 (VFLKPLVLFQ…TRLYCAVEMG (135 aa)) folds into the MPN domain.

This sequence belongs to the eIF-3 subunit F family. Component of the eukaryotic translation initiation factor 3 (eIF-3) complex. The eIF-3 complex interacts with pix.

It localises to the cytoplasm. Its function is as follows. Component of the eukaryotic translation initiation factor 3 (eIF-3) complex, which is involved in protein synthesis of a specialized repertoire of mRNAs and, together with other initiation factors, stimulates binding of mRNA and methionyl-tRNAi to the 40S ribosome. The eIF-3 complex specifically targets and initiates translation of a subset of mRNAs involved in cell proliferation. The polypeptide is Eukaryotic translation initiation factor 3 subunit F-2 (Drosophila sechellia (Fruit fly)).